The sequence spans 183 residues: PLAT domain-containing protein 2 (183 aa).

The signal sequence occupies residues 1–25 (MMPRRDVLFLSLLLVIATVSAVALA). The region spanning 31–158 (CVYTFFLRTG…SPYELSAVRN (128 aa)) is the PLAT domain.

It is found in the endoplasmic reticulum. Functionally, involved in response to abiotic stress. This chain is PLAT domain-containing protein 2, found in Arabidopsis thaliana (Mouse-ear cress).